We begin with the raw amino-acid sequence, 483 residues long: tRNA sulfurtransferase (483 aa).

Residues 62–166 (PQICDALTRV…QDKLTLIKAR (105 aa)) form the THUMP domain. ATP is bound by residues 184–185 (LI), Lys266, Gly288, and Gln297. An intrachain disulfide couples Cys345 to Cys457. The Rhodanese domain occupies 405-483 (LADTDVLLDI…GYTNVKVYRP (79 aa)). The Cysteine persulfide intermediate role is filled by Cys457.

Belongs to the ThiI family.

It is found in the cytoplasm. The enzyme catalyses [ThiI sulfur-carrier protein]-S-sulfanyl-L-cysteine + a uridine in tRNA + 2 reduced [2Fe-2S]-[ferredoxin] + ATP + H(+) = [ThiI sulfur-carrier protein]-L-cysteine + a 4-thiouridine in tRNA + 2 oxidized [2Fe-2S]-[ferredoxin] + AMP + diphosphate. The catalysed reaction is [ThiS sulfur-carrier protein]-C-terminal Gly-Gly-AMP + S-sulfanyl-L-cysteinyl-[cysteine desulfurase] + AH2 = [ThiS sulfur-carrier protein]-C-terminal-Gly-aminoethanethioate + L-cysteinyl-[cysteine desulfurase] + A + AMP + 2 H(+). Its pathway is cofactor biosynthesis; thiamine diphosphate biosynthesis. In terms of biological role, catalyzes the ATP-dependent transfer of a sulfur to tRNA to produce 4-thiouridine in position 8 of tRNAs, which functions as a near-UV photosensor. Also catalyzes the transfer of sulfur to the sulfur carrier protein ThiS, forming ThiS-thiocarboxylate. This is a step in the synthesis of thiazole, in the thiamine biosynthesis pathway. The sulfur is donated as persulfide by IscS. In Yersinia enterocolitica serotype O:8 / biotype 1B (strain NCTC 13174 / 8081), this protein is tRNA sulfurtransferase.